Reading from the N-terminus, the 251-residue chain is Cell division protein ZapD (251 aa).

Belongs to the ZapD family. Interacts with FtsZ.

It is found in the cytoplasm. Its function is as follows. Cell division factor that enhances FtsZ-ring assembly. Directly interacts with FtsZ and promotes bundling of FtsZ protofilaments, with a reduction in FtsZ GTPase activity. The chain is Cell division protein ZapD from Burkholderia cenocepacia (strain ATCC BAA-245 / DSM 16553 / LMG 16656 / NCTC 13227 / J2315 / CF5610) (Burkholderia cepacia (strain J2315)).